A 291-amino-acid chain; its full sequence is tRNA pseudouridine synthase B (291 aa).

The active-site Nucleophile is the Asp-41.

Belongs to the pseudouridine synthase TruB family. Type 1 subfamily.

It catalyses the reaction uridine(55) in tRNA = pseudouridine(55) in tRNA. Functionally, responsible for synthesis of pseudouridine from uracil-55 in the psi GC loop of transfer RNAs. The protein is tRNA pseudouridine synthase B of Parasynechococcus marenigrum (strain WH8102).